A 726-amino-acid chain; its full sequence is Catalase-peroxidase (726 aa).

Residues 1–33 (MSTSDDIHNTTATGKCPFHQGGHDQSAGGGTTT) form a disordered region. The tryptophyl-tyrosyl-methioninium (Trp-Tyr) (with M-252) cross-link spans 105 to 226 (WHGAGTYRSI…LGATEMGLIY (122 aa)). Catalysis depends on His-106, which acts as the Proton acceptor. The tryptophyl-tyrosyl-methioninium (Tyr-Met) (with W-105) cross-link spans 226-252 (YVNPEGPDHSGEPLSAAAAIRATFGNM). Position 267 (His-267) interacts with heme b.

Belongs to the peroxidase family. Peroxidase/catalase subfamily. Homodimer or homotetramer. Heme b is required as a cofactor. Formation of the three residue Trp-Tyr-Met cross-link is important for the catalase, but not the peroxidase activity of the enzyme.

It carries out the reaction H2O2 + AH2 = A + 2 H2O. It catalyses the reaction 2 H2O2 = O2 + 2 H2O. Its function is as follows. Bifunctional enzyme with both catalase and broad-spectrum peroxidase activity. In Escherichia coli (strain UTI89 / UPEC), this protein is Catalase-peroxidase.